A 135-amino-acid chain; its full sequence is Class I hydrophobin 15 (135 aa).

The signal sequence occupies residues 1-21 (MFAKSATIAIVLAALAGFSAA). Cystine bridges form between cysteine 50-cysteine 113, cysteine 57-cysteine 107, cysteine 58-cysteine 97, and cysteine 114-cysteine 127. A glycan (N-linked (GlcNAc...) asparagine) is linked at asparagine 131.

This sequence belongs to the fungal hydrophobin family. In terms of assembly, self-assembles to form functional amyloid fibrils called rodlets. Self-assembly into fibrillar rodlets occurs spontaneously at hydrophobic:hydrophilic interfaces and the rodlets further associate laterally to form amphipathic monolayers.

The protein resides in the secreted. It is found in the cell wall. Its function is as follows. Aerial growth, conidiation, and dispersal of filamentous fungi in the environment rely upon a capability of their secreting small amphipathic proteins called hydrophobins (HPBs) with low sequence identity. Class I can self-assemble into an outermost layer of rodlet bundles on aerial cell surfaces, conferring cellular hydrophobicity that supports fungal growth, development and dispersal; whereas Class II form highly ordered films at water-air interfaces through intermolecular interactions but contribute nothing to the rodlet structure. This Pleurotus ostreatus (strain PC15) (Oyster mushroom) protein is Class I hydrophobin 15.